A 370-amino-acid polypeptide reads, in one-letter code: Putative agmatine deiminase (370 aa).

The active-site Amidino-cysteine intermediate is the C361.

It belongs to the agmatine deiminase family.

It catalyses the reaction agmatine + H2O = N-carbamoylputrescine + NH4(+). The sequence is that of Putative agmatine deiminase from Shewanella baltica (strain OS155 / ATCC BAA-1091).